Here is a 222-residue protein sequence, read N- to C-terminus: Adenylate kinase (222 aa).

An ATP-binding site is contributed by 10 to 15; the sequence is GAGKGT. The NMP stretch occupies residues 30 to 59; the sequence is STGDMLRAAVKAGTPLGIEAKKVMDAGGLV. Residues threonine 31, arginine 36, 57 to 59, 85 to 88, and glutamine 92 each bind AMP; these read GLV and GFPR. An LID region spans residues 122 to 159; it reads GRRVHVASGRTYHVKYNPPKTEGVDDESGEPLIQRDDD. Residues arginine 123 and 132 to 133 each bind ATP; that span reads TY. Residues 138 to 160 form a disordered region; the sequence is NPPKTEGVDDESGEPLIQRDDDK. 2 residues coordinate AMP: arginine 156 and arginine 167. Glycine 207 serves as a coordination point for ATP.

The protein belongs to the adenylate kinase family. Monomer.

It is found in the cytoplasm. It catalyses the reaction AMP + ATP = 2 ADP. The protein operates within purine metabolism; AMP biosynthesis via salvage pathway; AMP from ADP: step 1/1. Catalyzes the reversible transfer of the terminal phosphate group between ATP and AMP. Plays an important role in cellular energy homeostasis and in adenine nucleotide metabolism. This Ralstonia pickettii (strain 12J) protein is Adenylate kinase.